A 43-amino-acid chain; its full sequence is Oxygen-evolving enhancer protein 2 (43 aa).

This sequence belongs to the PsbP family.

It localises to the plastid. Its subcellular location is the chloroplast thylakoid membrane. Its function is as follows. May be involved in the regulation of photosystem II. This Physcomitrium patens (Spreading-leaved earth moss) protein is Oxygen-evolving enhancer protein 2.